An 87-amino-acid polypeptide reads, in one-letter code: Large ribosomal subunit protein bL27 (87 aa).

The tract at residues 1 to 21 (MAHKKGGGSTRNGRDSASKRL) is disordered.

This sequence belongs to the bacterial ribosomal protein bL27 family.

This Amoebophilus asiaticus (strain 5a2) protein is Large ribosomal subunit protein bL27.